Reading from the N-terminus, the 105-residue chain is UPF0235 protein RPR_04990 (105 aa).

This sequence belongs to the UPF0235 family.

This chain is UPF0235 protein RPR_04990, found in Rickettsia peacockii (strain Rustic).